We begin with the raw amino-acid sequence, 325 residues long: MIARIWSGESPLWRLLLPLSWLYGLVSGGIRLCYRLGIKRAWRAPVPVVVVGNLTAGGNGKTPVVIWLVEQLQQRGIRVGVVSRGYGGKAASYPLLLTPQTSSAEAGDEPVLIYQRTGAPVAVSPVRSDAVKAILARHDVQIIVTDDGLQHYRLARDIEIVVIDGVRRFGNGWWLPAGPMRERASRLKSVDAVIVNGGVARPGEIPMQLAPGLAVNLCTGERRHVAELSNIVAMAGIGHPPRFFATLEACGASLQKCVPLADHQSLAFNDVKALVTDGQTLVMTEKDAVKCRGFAEDNWWYLPVDARLSGEQPDALLEQLISLAR.

55 to 62 (TAGGNGKT) is an ATP binding site.

This sequence belongs to the LpxK family.

It carries out the reaction a lipid A disaccharide + ATP = a lipid IVA + ADP + H(+). The protein operates within glycolipid biosynthesis; lipid IV(A) biosynthesis; lipid IV(A) from (3R)-3-hydroxytetradecanoyl-[acyl-carrier-protein] and UDP-N-acetyl-alpha-D-glucosamine: step 6/6. Transfers the gamma-phosphate of ATP to the 4'-position of a tetraacyldisaccharide 1-phosphate intermediate (termed DS-1-P) to form tetraacyldisaccharide 1,4'-bis-phosphate (lipid IVA). This is Tetraacyldisaccharide 4'-kinase from Citrobacter koseri (strain ATCC BAA-895 / CDC 4225-83 / SGSC4696).